Here is a 377-residue protein sequence, read N- to C-terminus: All-trans-retinol dehydrogenase [NAD(+)] ADH4 (377 aa).

Cys-47 contributes to the Zn(2+) binding site. 48-49 (PT) is a binding site for NAD(+). Zn(2+) contacts are provided by His-68, Cys-98, Cys-101, Cys-104, Cys-112, and Cys-179. NAD(+) is bound by residues 204-209 (GLGCVG), Asp-228, Lys-233, 297-299 (VGA), 320-322 (TFF), and Arg-372.

The protein belongs to the zinc-containing alcohol dehydrogenase family. Class-II subfamily. In terms of assembly, dimer. Zn(2+) is required as a cofactor. As to expression, liver specific.

It is found in the cytoplasm. It carries out the reaction all-trans-retinol + NAD(+) = all-trans-retinal + NADH + H(+). The enzyme catalyses 9-cis-retinol + NAD(+) = 9-cis-retinal + NADH + H(+). It catalyses the reaction 20-oxo-(5Z,8Z,11Z,14Z)-eicosatetraenoate + NAD(+) + H2O = (5Z,8Z,11Z,14Z)-eicosatetraenedioate + NADH + 2 H(+). The catalysed reaction is 20-hydroxy-(5Z,8Z,11Z,14Z)-eicosatetraenoate + NAD(+) = 20-oxo-(5Z,8Z,11Z,14Z)-eicosatetraenoate + NADH + H(+). It carries out the reaction 1,4-benzoquinone + NADH + H(+) = hydroquinone + NAD(+). Its activity is regulated as follows. Oxidation of 20-HETE is inhibited by low concentrations of N-heptylformamide. Oxidation of 20-HETE is a decreased by 55-65% by either all-trans-retinol or all-trans-retinoic acid. Strongly inhibited by omega-hydroxy fatty acids. Catalyzes the NAD-dependent oxidation of either all-trans-retinol or 9-cis-retinol. Also oxidizes long chain omega-hydroxy fatty acids, such as 20-HETE, producing both the intermediate aldehyde, 20-oxoarachidonate and the end product, a dicarboxylic acid, (5Z,8Z,11Z,14Z)-eicosatetraenedioate. Also catalyzes the reduction of benzoquinones. This chain is All-trans-retinol dehydrogenase [NAD(+)] ADH4, found in Rattus norvegicus (Rat).